Here is an 80-residue protein sequence, read N- to C-terminus: MKSGIHPNYVATTVVCGCGNTFETHSTKETGRINVEVCSQCHPFYTGKQKILDTGGRVARFEARYGKRAGKGAAKESAES.

C16, C18, C38, and C41 together coordinate Zn(2+).

This sequence belongs to the bacterial ribosomal protein bL31 family. Type A subfamily. As to quaternary structure, part of the 50S ribosomal subunit. Zn(2+) serves as cofactor.

In terms of biological role, binds the 23S rRNA. The polypeptide is Large ribosomal subunit protein bL31 (Rhodococcus jostii (strain RHA1)).